The following is a 346-amino-acid chain: Biotin synthase (346 aa).

A Radical SAM core domain is found at Asn41–Ser265. [4Fe-4S] cluster-binding residues include Cys56, Cys60, and Cys63. [2Fe-2S] cluster-binding residues include Cys100, Cys131, Cys191, and Arg263.

It belongs to the radical SAM superfamily. Biotin synthase family. Homodimer. [4Fe-4S] cluster serves as cofactor. It depends on [2Fe-2S] cluster as a cofactor.

The enzyme catalyses (4R,5S)-dethiobiotin + (sulfur carrier)-SH + 2 reduced [2Fe-2S]-[ferredoxin] + 2 S-adenosyl-L-methionine = (sulfur carrier)-H + biotin + 2 5'-deoxyadenosine + 2 L-methionine + 2 oxidized [2Fe-2S]-[ferredoxin]. Its pathway is cofactor biosynthesis; biotin biosynthesis; biotin from 7,8-diaminononanoate: step 2/2. Its function is as follows. Catalyzes the conversion of dethiobiotin (DTB) to biotin by the insertion of a sulfur atom into dethiobiotin via a radical-based mechanism. The chain is Biotin synthase from Pseudoalteromonas translucida (strain TAC 125).